A 270-amino-acid chain; its full sequence is Glutamate 5-kinase (270 aa).

ATP is bound at residue Lys-18. Substrate is bound by residues Ser-54, Asp-141, and Asn-153. An ATP-binding site is contributed by 173–174; it reads SD.

Belongs to the glutamate 5-kinase family.

It is found in the cytoplasm. It carries out the reaction L-glutamate + ATP = L-glutamyl 5-phosphate + ADP. It functions in the pathway amino-acid biosynthesis; L-proline biosynthesis; L-glutamate 5-semialdehyde from L-glutamate: step 1/2. In terms of biological role, catalyzes the transfer of a phosphate group to glutamate to form L-glutamate 5-phosphate. The sequence is that of Glutamate 5-kinase from Leifsonia xyli subsp. xyli (strain CTCB07).